The sequence spans 297 residues: 4-diphosphocytidyl-2-C-methyl-D-erythritol kinase (297 aa).

Lys19 is an active-site residue. Pro105 to Ala115 provides a ligand contact to ATP. Asp147 is a catalytic residue.

The protein belongs to the GHMP kinase family. IspE subfamily.

The catalysed reaction is 4-CDP-2-C-methyl-D-erythritol + ATP = 4-CDP-2-C-methyl-D-erythritol 2-phosphate + ADP + H(+). The protein operates within isoprenoid biosynthesis; isopentenyl diphosphate biosynthesis via DXP pathway; isopentenyl diphosphate from 1-deoxy-D-xylulose 5-phosphate: step 3/6. Its function is as follows. Catalyzes the phosphorylation of the position 2 hydroxy group of 4-diphosphocytidyl-2C-methyl-D-erythritol. The chain is 4-diphosphocytidyl-2-C-methyl-D-erythritol kinase from Rhizobium etli (strain CIAT 652).